The chain runs to 104 residues: Large ribosomal subunit protein uL24 (104 aa).

This sequence belongs to the universal ribosomal protein uL24 family. As to quaternary structure, part of the 50S ribosomal subunit.

Functionally, one of two assembly initiator proteins, it binds directly to the 5'-end of the 23S rRNA, where it nucleates assembly of the 50S subunit. One of the proteins that surrounds the polypeptide exit tunnel on the outside of the subunit. This Shewanella baltica (strain OS223) protein is Large ribosomal subunit protein uL24.